The primary structure comprises 155 residues: HTH-type transcriptional repressor MdtR (155 aa).

An HTH marR-type domain is found at 4–140 (ADQLMSDIQL…AAHITAKLAQ (137 aa)). A DNA-binding region (H-T-H motif) is located at residues 54–77 (VSEIAERMEVKPSAVTLMADRLEQ).

In terms of assembly, homodimer.

It localises to the cytoplasm. Its activity is regulated as follows. The binding of MdtR to the mdtRP promoter region is severely inhibited by adding excess concentrations of fusidic acid or novobiocin but not by actinomycin or streptomycin. Repressor of the multidrug resistance operon mdtRP. Acts by binding directly to the mdtRP promoter region, leading to the repression of its expression. The polypeptide is HTH-type transcriptional repressor MdtR (Bacillus subtilis (strain 168)).